Reading from the N-terminus, the 316-residue chain is MASTSRLDALPRVTCPNHPDAILVEDYRAGDMICPECGLVVGDRVIDVGSEWRTFSNDKATKDPSRVGDSQNPLLSDGDLSTMIGKGTGAASFDEFGNSKYQNRRTMSSSDRAMMNAFKEITTMADRINLPRNIVDRTNNLFKQVYEQKSLKGRANDAIASACLYIACRQEGVPRTFKEICAVSRISKKEIGRCFKLILKALETSVDLITTGDFMSRFCSNLCLPKQVQMAATHIARKAVELDLVPGRSPISVAAAAIYMASQASAEKRTQKEIGDIAGVADVTIRQSYRLIYPRAPDLFPTDFKFDTPVDKLPQL.

The TFIIB-type zinc finger occupies 11–42; that stretch reads PRVTCPNHPDAILVEDYRAGDMICPECGLVVG. Positions 15, 18, 34, and 37 each coordinate Zn(2+). Phosphoserine is present on residues Ser70, Ser76, and Ser92. Repeat copies occupy residues 124–200 and 218–294. Positions 152, 154, 189, and 196 each coordinate DNA. Residues 189 to 193 are core promoter DNA-binding; that stretch reads KEIGR. Lys238 is modified (N6-acetyllysine; by autocatalysis). Positions 244-316 are necessary for TATA box-bound complex TBP formation; that stretch reads LVPGRSPISV…DTPVDKLPQL (73 aa). Arg248 contributes to the DNA binding site. Residues 249 to 252 are core promoter DNA-binding; sequence SPIS. DNA contacts are provided by Lys272, Ala281, Thr284, Arg286, and Arg290. The segment at 283–286 is core promoter DNA-binding; sequence VTIR.

Belongs to the TFIIB family. Found in a ternary complex with TATA box-bound TBP. Part of a TFIID-containing RNA polymerase II pre-initiation complex (PIC) that is composed of TBP and at least GTF2A1, GTF2A2, GTF2E1, GTF2E2, GTF2F1, GTF2H2, GTF2H3, GTF2H4, GTF2H5, GTF2B, TCEA1, ERCC2, ERCC3, TAF1, TAF2, TAF3, TAF4, TAF5, TAF6, TAF7, TAF8, TAF9, TAF10, TAF11, TAF12 and TAF13. Associates with TFIID-TFIIA (DA complex) to form TFIID-TFIIA-TFIIB (DAB complex), which is then recognized by RNA polymerase II (Pol II). Found in a RNA polymerase II initiation complex. Interacts (via C-terminus) with TBP; this interaction with TATA box-bound TBP guides Pol II into the PIC. Interacts (via N-terminus) with Pol II. Interacts (via C-terminus) with SSU72; this interaction is inhibited by SYMPK. Interacts with NR2F1; this interaction is direct. Interacts with PGR. Interacts with ESR1. Interacts with GTF2F1 (via C-terminus and preferentially via acetylated form); this interaction prevents binding of GTF2B to GTF2F2. Interacts with GTF2F2 (via N-terminus); this interaction is inhibited in presence of GTF2F1. Interacts with the transcription elongation factor TCEA2. Interacts with HSF1 (via transactivation domain). Interacts with GPBP1. In terms of processing, acetylated. Autoacetylated; autoacetylation at Lys-238 stimulates transcription activation.

The protein resides in the nucleus. The protein localises to the chromosome. The catalysed reaction is L-lysyl-[protein] + acetyl-CoA = N(6)-acetyl-L-lysyl-[protein] + CoA + H(+). Functionally, general transcription factor that plays a role in transcription initiation by RNA polymerase II (Pol II). Involved in the pre-initiation complex (PIC) formation and Pol II recruitment at promoter DNA. Together with the TATA box-bound TBP forms the core initiation complex and provides a bridge between TBP and the Pol II-TFIIF complex. Released from the PIC early following the onset of transcription during the initiation and elongation transition and reassociates with TBP during the next transcription cycle. Associates with chromatin to core promoter-specific regions. Binds to two distinct DNA core promoter consensus sequence elements in a TBP-independent manner; these IIB-recognition elements (BREs) are localized immediately upstream (BREu), 5'-[GC][GC][GA]CGCC-3', and downstream (BREd), 5'-[GA]T[TGA][TG][GT][TG][TG]-3', of the TATA box element. Modulates transcription start site selection. Also exhibits autoacetyltransferase activity that contributes to the activated transcription. This Pongo abelii (Sumatran orangutan) protein is Transcription initiation factor IIB.